The sequence spans 156 residues: SsrA-binding protein (156 aa).

The segment at 134–156 (YDKRETLKRKEQDREMARALRKR) is disordered.

The protein belongs to the SmpB family.

It is found in the cytoplasm. Functionally, required for rescue of stalled ribosomes mediated by trans-translation. Binds to transfer-messenger RNA (tmRNA), required for stable association of tmRNA with ribosomes. tmRNA and SmpB together mimic tRNA shape, replacing the anticodon stem-loop with SmpB. tmRNA is encoded by the ssrA gene; the 2 termini fold to resemble tRNA(Ala) and it encodes a 'tag peptide', a short internal open reading frame. During trans-translation Ala-aminoacylated tmRNA acts like a tRNA, entering the A-site of stalled ribosomes, displacing the stalled mRNA. The ribosome then switches to translate the ORF on the tmRNA; the nascent peptide is terminated with the 'tag peptide' encoded by the tmRNA and targeted for degradation. The ribosome is freed to recommence translation, which seems to be the essential function of trans-translation. This Latilactobacillus sakei subsp. sakei (strain 23K) (Lactobacillus sakei subsp. sakei) protein is SsrA-binding protein.